The following is a 113-amino-acid chain: U11-theraphotoxin-Hhn1a (113 aa).

A signal peptide spans 1 to 21 (MNTVRVTFLLVFVLAVSLGQA). The propeptide occupies 22–74 (DKDENRMEMQKKTEQGKSYLDFAENLLLQKLEELEAKLLEEDSEESRNSRQKR). 3 cysteine pairs are disulfide-bonded: Cys-75-Cys-90, Cys-82-Cys-95, and Cys-89-Cys-110.

It belongs to the neurotoxin 14 (magi-1) family. 01 (HNTX-16) subfamily. As to expression, expressed by the venom gland.

It localises to the secreted. Probable ion channel inhibitor. In Cyriopagopus hainanus (Chinese bird spider), this protein is U11-theraphotoxin-Hhn1a.